A 214-amino-acid polypeptide reads, in one-letter code: Cytochrome b (214 aa).

A run of 4 helical transmembrane segments spans residues 31–51 (FGSM…FLAI), 75–96 (WIMQ…YIHI), 111–131 (WLSG…GYVL), and 176–196 (FFAL…IHII). Residues His81 and His95 each contribute to the heme b site. 2 residues coordinate heme b: His180 and His194. Position 199 (His199) interacts with a ubiquinone.

The protein belongs to the cytochrome b family. As to quaternary structure, the cytochrome bc1 complex contains 3 respiratory subunits (MT-CYB, CYC1 and UQCRFS1), 2 core proteins (UQCRC1 and UQCRC2) and probably 6 low-molecular weight proteins. The cofactor is heme b.

The protein resides in the mitochondrion inner membrane. In terms of biological role, component of the ubiquinol-cytochrome c reductase complex (complex III or cytochrome b-c1 complex) that is part of the mitochondrial respiratory chain. The b-c1 complex mediates electron transfer from ubiquinol to cytochrome c. Contributes to the generation of a proton gradient across the mitochondrial membrane that is then used for ATP synthesis. This is Cytochrome b (MT-CYB) from Atractaspis micropholis (Mole viper).